We begin with the raw amino-acid sequence, 469 residues long: Phenylalanine--tRNA ligase alpha subunit (469 aa).

Residues threonine 309, 348-350 (QLD), and phenylalanine 388 each bind L-phenylalanine. Residue glutamate 390 participates in Mg(2+) binding.

It belongs to the class-II aminoacyl-tRNA synthetase family. Phe-tRNA synthetase alpha subunit type 2 subfamily. As to quaternary structure, tetramer of two alpha and two beta subunits. It depends on Mg(2+) as a cofactor.

The protein localises to the cytoplasm. The enzyme catalyses tRNA(Phe) + L-phenylalanine + ATP = L-phenylalanyl-tRNA(Phe) + AMP + diphosphate + H(+). This chain is Phenylalanine--tRNA ligase alpha subunit, found in Sulfurisphaera tokodaii (strain DSM 16993 / JCM 10545 / NBRC 100140 / 7) (Sulfolobus tokodaii).